The primary structure comprises 216 residues: Cytidylate kinase (216 aa).

7-15 serves as a coordination point for ATP; it reads GPSGTGKST.

This sequence belongs to the cytidylate kinase family. Type 1 subfamily.

Its subcellular location is the cytoplasm. It catalyses the reaction CMP + ATP = CDP + ADP. It carries out the reaction dCMP + ATP = dCDP + ADP. In Chlamydia felis (strain Fe/C-56) (Chlamydophila felis), this protein is Cytidylate kinase.